We begin with the raw amino-acid sequence, 208 residues long: 2-phospho-L-lactate guanylyltransferase (208 aa).

It belongs to the CofC family. Homodimer.

The catalysed reaction is (2S)-2-phospholactate + GTP + H(+) = (2S)-lactyl-2-diphospho-5'-guanosine + diphosphate. It participates in cofactor biosynthesis; coenzyme F420 biosynthesis. Its function is as follows. Guanylyltransferase that catalyzes the activation of (2S)-2-phospholactate (2-PL) as (2S)-lactyl-2-diphospho-5'-guanosine, via the condensation of 2-PL with GTP. It is involved in the biosynthesis of coenzyme F420, a hydride carrier cofactor. This Haloarcula marismortui (strain ATCC 43049 / DSM 3752 / JCM 8966 / VKM B-1809) (Halobacterium marismortui) protein is 2-phospho-L-lactate guanylyltransferase.